A 354-amino-acid polypeptide reads, in one-letter code: NADH-quinone oxidoreductase subunit H (354 aa).

10 consecutive transmembrane segments (helical) span residues 12–32 (LLGG…LIAP), 62–82 (PWGL…EIIL), 89–109 (GLFL…WVVV), 124–144 (LLFL…AGWA), 162–182 (VSYE…SGTL), 203–223 (FLSW…ISGL), 239–259 (EIVA…FFLA), 263–283 (NMIL…LPPI), 291–311 (IPGW…FLWV), and 326–346 (LGWK…GLWI).

It belongs to the complex I subunit 1 family. In terms of assembly, NDH-1 is composed of 14 different subunits. Subunits NuoA, H, J, K, L, M, N constitute the membrane sector of the complex.

The protein localises to the cell inner membrane. The enzyme catalyses a quinone + NADH + 5 H(+)(in) = a quinol + NAD(+) + 4 H(+)(out). Its function is as follows. NDH-1 shuttles electrons from NADH, via FMN and iron-sulfur (Fe-S) centers, to quinones in the respiratory chain. The immediate electron acceptor for the enzyme in this species is believed to be ubiquinone. Couples the redox reaction to proton translocation (for every two electrons transferred, four hydrogen ions are translocated across the cytoplasmic membrane), and thus conserves the redox energy in a proton gradient. This subunit may bind ubiquinone. This is NADH-quinone oxidoreductase subunit H from Methylibium petroleiphilum (strain ATCC BAA-1232 / LMG 22953 / PM1).